The primary structure comprises 93 residues: Small ribosomal subunit protein bS20 (93 aa).

Residues 1 to 18 (MPLHKSAEKRLRQSEKRN) are compositionally biased toward basic and acidic residues. A disordered region spans residues 1–25 (MPLHKSAEKRLRQSEKRNARNRARK).

Belongs to the bacterial ribosomal protein bS20 family.

In terms of biological role, binds directly to 16S ribosomal RNA. The sequence is that of Small ribosomal subunit protein bS20 from Chlorobium chlorochromatii (strain CaD3).